Reading from the N-terminus, the 205-residue chain is Large ribosomal subunit protein uL4 (205 aa).

Residues 43–97 are disordered; it reads GKRQGTSKVKNRSAVRGGGKKPWRQKGTGRARQGSIRAPQWRGGGTVFGPTPRSY. A compositionally biased stretch (basic residues) spans 51–71; it reads VKNRSAVRGGGKKPWRQKGTG.

The protein belongs to the universal ribosomal protein uL4 family. Part of the 50S ribosomal subunit.

One of the primary rRNA binding proteins, this protein initially binds near the 5'-end of the 23S rRNA. It is important during the early stages of 50S assembly. It makes multiple contacts with different domains of the 23S rRNA in the assembled 50S subunit and ribosome. In terms of biological role, forms part of the polypeptide exit tunnel. This chain is Large ribosomal subunit protein uL4, found in Lactobacillus acidophilus (strain ATCC 700396 / NCK56 / N2 / NCFM).